The chain runs to 265 residues: Chalcone synthase (265 aa).

Cysteine 40 is a catalytic residue.

Belongs to the thiolase-like superfamily. Chalcone/stilbene synthases family.

It carries out the reaction (E)-4-coumaroyl-CoA + 3 malonyl-CoA + 3 H(+) = 2',4,4',6'-tetrahydroxychalcone + 3 CO2 + 4 CoA. It functions in the pathway secondary metabolite biosynthesis; flavonoid biosynthesis. The primary product of this enzyme is 4,2',4',6'-tetrahydroxychalcone (also termed naringenin-chalcone or chalcone) which can under specific conditions spontaneously isomerize into naringenin. The polypeptide is Chalcone synthase (CHSII) (Medicago sativa (Alfalfa)).